The following is a 315-amino-acid chain: Tyrosine--tRNA ligase (315 aa).

Position 32 (Y32) interacts with L-tyrosine. The 'HIGH' region motif lies at P37–H45. Residues Y152, Q156, D159, and Q174 each contribute to the L-tyrosine site. Residues K208–S212 carry the 'KMSKS' region motif. S211 contacts ATP.

Belongs to the class-I aminoacyl-tRNA synthetase family. TyrS type 3 subfamily. Homodimer.

The protein localises to the cytoplasm. The catalysed reaction is tRNA(Tyr) + L-tyrosine + ATP = L-tyrosyl-tRNA(Tyr) + AMP + diphosphate + H(+). Catalyzes the attachment of tyrosine to tRNA(Tyr) in a two-step reaction: tyrosine is first activated by ATP to form Tyr-AMP and then transferred to the acceptor end of tRNA(Tyr). This is Tyrosine--tRNA ligase from Methanoculleus marisnigri (strain ATCC 35101 / DSM 1498 / JR1).